Reading from the N-terminus, the 753-residue chain is Taperin (753 aa).

Residues 141–348 form a disordered region; the sequence is FDSPAAPRRR…IRPSSKPDME (208 aa). The segment covering 182 to 197 has biased composition (pro residues); it reads PAPPVLPSQPAPPISP. Composition is skewed to polar residues over residues 230–239 and 250–263; these read LQKTGSNSFT and VNRSLSNGPMTQES. Serine 274 is subject to Phosphoserine. Residues 300-322 show a composition bias toward low complexity; it reads TPSATPVGPPAFLAPSPASATPS. Positions 323–335 are enriched in polar residues; the sequence is QRQWVSSATSAND. Positions 337 to 347 are enriched in basic and acidic residues; sequence FEIRPSSKPDM. 3 positions are modified to phosphoserine: serine 402, serine 458, and serine 502. Positions 438 to 488 are disordered; it reads GCPRPAISDTDKSVRRQRPASPPPFLPATTEAEPAEGLGVPGLTKNGQEPV. Disordered stretches follow at residues 544–583 and 637–676; these read FTVVPKRKPGTLQEPHLSQTNGQFQQGAEEQDADSLSGPH and FEYPSESSLAQEEAEEEEEEEEEEEGEDGEEEEVGPDSEK. The segment covering 559 to 571 has biased composition (polar residues); the sequence is HLSQTNGQFQQGA. Over residues 648 to 672 the composition is skewed to acidic residues; the sequence is EEAEEEEEEEEEEEGEDGEEEEVGP.

This sequence belongs to the taperin family. Interacts with GRXCR2; the interaction restricts TPRN to the stereocilum basal region. Interacts with actin ACTB; the interaction may stabilize stereocilia. Interacts with CLIC5. Interacts with PTPRQ. TPRN, CLIC5 and PTPQR form concentric rings at the base of stereocilia and may form a complex. Interacts with phosphatase PPP1CA; the interaction results in inhibition of PPC1A phosphatase activity. Interacts with DNA damage response proteins XRCC6/KU70, XRCC5/KU80, PARP1, TOP1 and TOP2A; these interactions recruit TPRN to sites of DNA damage where it may play a role in DNA repair.

It is found in the cell projection. The protein localises to the stereocilium. It localises to the microvillus. The protein resides in the nucleus. Its subcellular location is the nucleoplasm. It is found in the cytoplasm. Functionally, essential for hearing. Required for maintenance of stereocilia on both inner and outer hair cells. Necessary for the integrity of the stereociliary rootlet. May act as an actin cytoskeleton regulator involved in the regulation of actin dynamics at the pointed end in hair cells. Forms rings at the base of stereocilia and binds actin filaments in the stereocilia which may stabilize the stereocilia. Acts as a strong inhibitor of PPP1CA phosphatase activity. Recruited to sites of DNA damage and may play a role in DNA damage repair. The chain is Taperin (Tprn) from Rattus norvegicus (Rat).